The primary structure comprises 165 residues: Regulator of ribonuclease activity A (165 aa).

The protein belongs to the RraA family. In terms of assembly, homotrimer. Binds to both RNA-binding sites in the C-terminal region of Rne and to RhlB.

It localises to the cytoplasm. Functionally, globally modulates RNA abundance by binding to RNase E (Rne) and regulating its endonucleolytic activity. Can modulate Rne action in a substrate-dependent manner by altering the composition of the degradosome. Modulates RNA-binding and helicase activities of the degradosome. The sequence is that of Regulator of ribonuclease activity A from Haemophilus ducreyi (strain 35000HP / ATCC 700724).